The following is a 467-amino-acid chain: MRLPREIGPIHFVGIGGIGMSGIAEVLCNLGYTVQGSDASDNANVARLREKGITVSVGHKAENVAGADVVVVSTAIKRDNPELMTARAQRIPVVRRAEMLAELMRLKSCVAIAGTHGKTTTTSMVAALLDAGGIDPTVINGGIINAYGTNARLGAGDWMVVEADESDGTFLKLPADVAIVTNVDPEHLDHFKTFDAVQDAFRAFVENVPFYGFAVMCIDHPVVQALVGKIEDRRIITYGVNPQADVRLVDLSPANGSSRFKVVFRDRKSGATHEISDITLPMPGRHNASNATAAIAVAHELGISDEAIRKAIAGFGGVKRRFTRTGEWNGVTIIDDYGHHPVEIAAVLKAARESTSGKVIAVVQPHRYTRLQSLFEEFCTCFNDADAVIVADVYPAGEAPIEGIDRDHFVLGLRAHGHRDVLPLPQAADLAGIVKRLAKSGDLVVCLGAGNITQWAYALPNELKALG.

Residue 114–120 (GTHGKTT) participates in ATP binding.

Belongs to the MurCDEF family.

The protein localises to the cytoplasm. The enzyme catalyses UDP-N-acetyl-alpha-D-muramate + L-alanine + ATP = UDP-N-acetyl-alpha-D-muramoyl-L-alanine + ADP + phosphate + H(+). The protein operates within cell wall biogenesis; peptidoglycan biosynthesis. Cell wall formation. The chain is UDP-N-acetylmuramate--L-alanine ligase from Bradyrhizobium sp. (strain BTAi1 / ATCC BAA-1182).